A 396-amino-acid polypeptide reads, in one-letter code: Acetate kinase (396 aa).

Asn-8 lines the Mg(2+) pocket. Lys-15 is a binding site for ATP. Arg-89 lines the substrate pocket. The Proton donor/acceptor role is filled by Asp-146. Residues 206 to 210, 280 to 282, and 328 to 332 each bind ATP; these read HLGNG, DMR, and GVGEN. Residue Glu-382 participates in Mg(2+) binding.

Belongs to the acetokinase family. In terms of assembly, homodimer. The cofactor is Mg(2+). Mn(2+) is required as a cofactor.

It localises to the cytoplasm. The enzyme catalyses acetate + ATP = acetyl phosphate + ADP. Its pathway is metabolic intermediate biosynthesis; acetyl-CoA biosynthesis; acetyl-CoA from acetate: step 1/2. Catalyzes the formation of acetyl phosphate from acetate and ATP. Can also catalyze the reverse reaction. This is Acetate kinase from Clavibacter michiganensis subsp. michiganensis (strain NCPPB 382).